We begin with the raw amino-acid sequence, 864 residues long: Probable M1 family aminopeptidase 2 (864 aa).

Substrate contacts are provided by residues glutamate 149 and 289-293; that span reads GAMEN. Histidine 325 contacts Zn(2+). The active-site Proton acceptor is glutamate 326. Residues histidine 329 and glutamate 348 each contribute to the Zn(2+) site.

Belongs to the peptidase M1 family. The cofactor is Zn(2+).

The polypeptide is Probable M1 family aminopeptidase 2 (Encephalitozoon cuniculi (strain GB-M1) (Microsporidian parasite)).